The following is a 285-amino-acid chain: MKYIGAHVSAAGGLANAPARAAEIGATAFALFTKNQRQWRAAPLTPQVIDDFKIACEKYHFSAAQILPHDSYLINLGHPVSEALEKSRDAFLDEMQRCEQLGLTLLNFHPGSHLMQIAQEDCLARIAESINIALAQTEGVTAVIENTAGQGSNLGFEFEQLAAIIDGVEDKSRVGVCIDTCHAFAAGYDLRTPEACEKTFAEFGKIVGFQYLRGMHLNDAKSAFGSRVDRHHSLGEGNIGHDAFRWIMQDARFDGIPLILETINPDIWAEEIAWLKAQQIAEVMA.

Zn(2+) contacts are provided by H69, H109, E145, D179, H182, H216, D229, H231, and E261.

Belongs to the AP endonuclease 2 family. Requires Zn(2+) as cofactor.

The enzyme catalyses Endonucleolytic cleavage to 5'-phosphooligonucleotide end-products.. In terms of biological role, endonuclease IV plays a role in DNA repair. It cleaves phosphodiester bonds at apurinic or apyrimidinic (AP) sites, generating a 3'-hydroxyl group and a 5'-terminal sugar phosphate. In Salmonella paratyphi A (strain AKU_12601), this protein is Probable endonuclease 4.